A 224-amino-acid polypeptide reads, in one-letter code: Mammalian ependymin-related protein 1 (224 aa).

An N-terminal signal peptide occupies residues 1 to 37; that stretch reads MLTRAPRRLVQGPRETWLLGGLWVWILCGLGMAGSPG. Cystine bridges form between C42–C172, C88–C222, and C113–C210. N-linked (GlcNAc...) asparagine glycans are attached at residues N130 and N182.

Belongs to the ependymin family. Homodimer. Post-translationally, N-glycosylated; the glycan contains mannose-6-phosphate moieties. In terms of tissue distribution, detected in brain (at protein level).

Its subcellular location is the lysosome lumen. It is found in the secreted. Functionally, binds anionic lipids and gangliosides at acidic pH. The sequence is that of Mammalian ependymin-related protein 1 (Epdr1) from Rattus norvegicus (Rat).